The primary structure comprises 434 residues: Alpha-enolase (434 aa).

Ser2 carries the post-translational modification N-acetylserine. Residue Ser40 participates in Mg(2+) binding. Tyr44 bears the Phosphotyrosine mark. Position 60 is an N6-acetyllysine; alternate (Lys60). Lys60 is modified (N6-succinyllysine; alternate). Position 71 is an N6-acetyllysine (Lys71). Lys89 is subject to N6-acetyllysine; alternate. Lys89 is subject to N6-succinyllysine; alternate. Residues Lys92 and Lys126 each carry the N6-acetyllysine modification. His158 and Glu167 together coordinate substrate. Residues Lys193 and Lys199 each carry the N6-acetyllysine modification. An N6-acetyllysine; alternate modification is found at Lys202. Residue Lys202 forms a Glycyl lysine isopeptide (Lys-Gly) (interchain with G-Cter in SUMO2); alternate linkage. The Proton donor role is filled by Glu210. Lys228 and Lys233 each carry N6-acetyllysine; alternate. An N6-succinyllysine; alternate modification is found at Lys228. Lys228 carries the post-translational modification N6-(2-hydroxyisobutyryl)lysine; alternate. N6-malonyllysine; alternate is present on Lys233. Asp245 lines the Mg(2+) pocket. Ser254 bears the Phosphoserine mark. N6-acetyllysine is present on Lys256. Ser263 is subject to Phosphoserine. An N6-acetyllysine; alternate modification is found at Lys281. N6-(2-hydroxyisobutyryl)lysine; alternate is present on Lys281. Residue Tyr287 is modified to Phosphotyrosine. Ser291 bears the Phosphoserine mark. Glu293 and Asp318 together coordinate Mg(2+). Residues Glu293 and Asp318 each contribute to the substrate site. N6-acetyllysine is present on residues Lys335 and Lys343. Catalysis depends on Lys343, which acts as the Proton acceptor. Substrate contacts are provided by residues 370–373 (SHRS) and Lys394. The segment at 405 to 434 (AKYNQILRIEEELGSKAKFAGRSFRNPLAK) is required for interaction with PLG. Lys406 is subject to N6-acetyllysine. The residue at position 420 (Lys420) is an N6-acetyllysine; alternate. Residue Lys420 is modified to N6-succinyllysine; alternate. Lys420 is modified (N6-malonyllysine; alternate).

This sequence belongs to the enolase family. In terms of assembly, mammalian enolase is composed of 3 isozyme subunits, alpha, beta and gamma, which can form homodimers or heterodimers which are cell-type and development-specific. ENO1 interacts with PLG in the neuronal plasma membrane and promotes its activation. The C-terminal lysine is required for this binding. In vitro, interacts with several glycolytic enzymes including PKM, PGM, CKM and aldolase. Also binds troponin, in vitro. Interacts with ENO4 and PGAM2. Interacts with CMTM6. The cofactor is Mg(2+). ISGylated. In terms of processing, lysine 2-hydroxyisobutyrylation (Khib) by p300/EP300 activates the phosphopyruvate hydratase activity. Testis. Found in the principal piece of sperm tail (at protein level). The alpha/alpha homodimer is expressed in embryo and in most adult tissues. The alpha/beta heterodimer and the beta/beta homodimer are found in striated muscle, and the alpha/gamma heterodimer and the gamma/gamma homodimer in neurons. In striated muscle, expression of ENO1 appears to be independent of fiber type.

Its subcellular location is the cytoplasm. The protein localises to the cell membrane. The enzyme catalyses (2R)-2-phosphoglycerate = phosphoenolpyruvate + H2O. Its pathway is carbohydrate degradation; glycolysis; pyruvate from D-glyceraldehyde 3-phosphate: step 4/5. In terms of biological role, glycolytic enzyme the catalyzes the conversion of 2-phosphoglycerate to phosphoenolpyruvate. In addition to glycolysis, involved in various processes such as growth control, hypoxia tolerance and allergic responses. May also function in the intravascular and pericellular fibrinolytic system due to its ability to serve as a receptor and activator of plasminogen on the cell surface of several cell-types such as leukocytes and neurons. Stimulates immunoglobulin production. In Mus musculus (Mouse), this protein is Alpha-enolase (Eno1).